Here is a 251-residue protein sequence, read N- to C-terminus: DNA repair protein RecO (251 aa).

Belongs to the RecO family.

Functionally, involved in DNA repair and RecF pathway recombination. This is DNA repair protein RecO from Lactococcus lactis subsp. cremoris (strain SK11).